A 125-amino-acid polypeptide reads, in one-letter code: Outer membrane protein assembly factor BamE (125 aa).

The N-terminal stretch at 1–17 (MNKTLILALSALLGLAA) is a signal peptide. Cys18 carries the N-palmitoyl cysteine lipid modification. Cys18 is lipidated: S-diacylglycerol cysteine.

It belongs to the BamE family. In terms of assembly, part of the Bam complex.

It is found in the cell outer membrane. Part of the outer membrane protein assembly complex, which is involved in assembly and insertion of beta-barrel proteins into the outer membrane. This is Outer membrane protein assembly factor BamE from Neisseria meningitidis serogroup B (strain ATCC BAA-335 / MC58).